A 223-amino-acid polypeptide reads, in one-letter code: Neurotrophic factor BDNF precursor form (223 aa).

The signal sequence occupies residues 1–5 (SCMKA). A propeptide spanning residues 6 to 114 (APMKEVGVRG…AANMSXRVRR (109 aa)) is cleaved from the precursor. The N-linked (GlcNAc...) asparagine glycan is linked to Asn107. 2 disulfides stabilise this stretch: Cys127-Cys194 and Cys172-Cys223.

This sequence belongs to the NGF-beta family.

Its subcellular location is the secreted. Its function is as follows. Promotes the survival of neuronal populations that are all located either in the central nervous system or directly connected to it. This is Neurotrophic factor BDNF precursor form (BDNF) from Eryx jayakari (Arabian sand boa).